The sequence spans 166 residues: Large ribosomal subunit protein uL10 (166 aa).

The protein belongs to the universal ribosomal protein uL10 family. In terms of assembly, part of the ribosomal stalk of the 50S ribosomal subunit. The N-terminus interacts with L11 and the large rRNA to form the base of the stalk. The C-terminus forms an elongated spine to which L12 dimers bind in a sequential fashion forming a multimeric L10(L12)X complex.

Forms part of the ribosomal stalk, playing a central role in the interaction of the ribosome with GTP-bound translation factors. In Ureaplasma parvum serovar 3 (strain ATCC 27815 / 27 / NCTC 11736), this protein is Large ribosomal subunit protein uL10.